A 226-amino-acid polypeptide reads, in one-letter code: ATP synthase F(0) complex subunit a (226 aa).

Helical transmembrane passes span 10-30 (ITPTLMGLPIIILIIMFPPVI), 68-88 (WSLMLASLIIFIGSTNLLGLL), 97-117 (QLSMNLGMAIPPWAGAVILGF), 138-158 (IPMLVIIETISLFIQPMALAV), 164-184 (ITAGHLLMHLIGGATLVLTSI), and 189-209 (AMITFIILIMLTILEFAVALI).

This sequence belongs to the ATPase A chain family. In terms of assembly, component of the ATP synthase complex composed at least of ATP5F1A/subunit alpha, ATP5F1B/subunit beta, ATP5MC1/subunit c (homooctomer), MT-ATP6/subunit a, MT-ATP8/subunit 8, ATP5ME/subunit e, ATP5MF/subunit f, ATP5MG/subunit g, ATP5MK/subunit k, ATP5MJ/subunit j, ATP5F1C/subunit gamma, ATP5F1D/subunit delta, ATP5F1E/subunit epsilon, ATP5PF/subunit F6, ATP5PB/subunit b, ATP5PD/subunit d, ATP5PO/subunit OSCP. ATP synthase complex consists of a soluble F(1) head domain (subunits alpha(3) and beta(3)) - the catalytic core - and a membrane F(0) domain - the membrane proton channel (subunits c, a, 8, e, f, g, k and j). These two domains are linked by a central stalk (subunits gamma, delta, and epsilon) rotating inside the F1 region and a stationary peripheral stalk (subunits F6, b, d, and OSCP). Interacts with DNAJC30; interaction is direct.

It localises to the mitochondrion inner membrane. It catalyses the reaction H(+)(in) = H(+)(out). Functionally, subunit a, of the mitochondrial membrane ATP synthase complex (F(1)F(0) ATP synthase or Complex V) that produces ATP from ADP in the presence of a proton gradient across the membrane which is generated by electron transport complexes of the respiratory chain. ATP synthase complex consist of a soluble F(1) head domain - the catalytic core - and a membrane F(1) domain - the membrane proton channel. These two domains are linked by a central stalk rotating inside the F(1) region and a stationary peripheral stalk. During catalysis, ATP synthesis in the catalytic domain of F(1) is coupled via a rotary mechanism of the central stalk subunits to proton translocation. With the subunit c (ATP5MC1), forms the proton-conducting channel in the F(0) domain, that contains two crucial half-channels (inlet and outlet) that facilitate proton movement from the mitochondrial intermembrane space (IMS) into the matrix. Protons are taken up via the inlet half-channel and released through the outlet half-channel, following a Grotthuss mechanism. This is ATP synthase F(0) complex subunit a from Cricetulus griseus (Chinese hamster).